The chain runs to 334 residues: Ventral anterior homeobox 1 (334 aa).

A compositionally biased stretch (basic and acidic residues) spans 1-34; the sequence is MFGKPDKMDVRCHSDAEAARVSKNAHKESRESKG. Residues 1 to 41 are disordered; the sequence is MFGKPDKMDVRCHSDAEAARVSKNAHKESRESKGAEGNLPA. Positions 100–159 form a DNA-binding region, homeobox; it reads PKRTRTSFTAEQLYRLEMEFQRCQYVVGRERTELARQLNLSETQVKVWFQNRRTKQKKDQ. 2 disordered regions span residues 234 to 263 and 314 to 334; these read PGPAGAASPHPPAVGGAPGPGPAGPGGLHA and SAFEPYSRTNNKEGAEKKALD. The segment covering 323–334 has biased composition (basic and acidic residues); the sequence is NNKEGAEKKALD.

The protein belongs to the EMX homeobox family.

It localises to the nucleus. Functionally, transcription factor that may function in dorsoventral specification of the forebrain. Required for axon guidance and major tract formation in the developing forebrain. May contribute to the differentiation of the neuroretina, pigmented epithelium and optic stalk. The protein is Ventral anterior homeobox 1 (VAX1) of Homo sapiens (Human).